A 460-amino-acid polypeptide reads, in one-letter code: Chromosomal replication initiator protein DnaA (460 aa).

The domain I, interacts with DnaA modulators stretch occupies residues 1 to 84 (MAVSLWQQCI…RFDIGSRPSA (84 aa)). The segment at 84 to 123 (AKKPEPAPVAAVRVPSPQTKASVGTAFNTTEPVANTNHRS) is domain II. Positions 124 to 340 (NINPTYQFDN…GALNRVIANA (217 aa)) are domain III, AAA+ region. Residues G168, G170, K171, and T172 each coordinate ATP. A domain IV, binds dsDNA region spans residues 341 to 460 (NFTGRPITID…YANLIRTLSS (120 aa)).

Belongs to the DnaA family. As to quaternary structure, oligomerizes as a right-handed, spiral filament on DNA at oriC.

The protein resides in the cytoplasm. In terms of biological role, plays an essential role in the initiation and regulation of chromosomal replication. ATP-DnaA binds to the origin of replication (oriC) to initiate formation of the DNA replication initiation complex once per cell cycle. Binds the DnaA box (a 9 base pair repeat at the origin) and separates the double-stranded (ds)DNA. Forms a right-handed helical filament on oriC DNA; dsDNA binds to the exterior of the filament while single-stranded (ss)DNA is stabiized in the filament's interior. The ATP-DnaA-oriC complex binds and stabilizes one strand of the AT-rich DNA unwinding element (DUE), permitting loading of DNA polymerase. After initiation quickly degrades to an ADP-DnaA complex that is not apt for DNA replication. Binds acidic phospholipids. In Shewanella oneidensis (strain ATCC 700550 / JCM 31522 / CIP 106686 / LMG 19005 / NCIMB 14063 / MR-1), this protein is Chromosomal replication initiator protein DnaA.